The following is a 674-amino-acid chain: Xaa-Pro aminopeptidase 2 (674 aa).

Residues Met-1–Tyr-22 form the signal peptide. An N-linked (GlcNAc...) asparagine glycan is attached at Asn-65. Substrate is bound at residue Arg-116. Asn-278 and Asn-293 each carry an N-linked (GlcNAc...) asparagine glycan. His-430 lines the substrate pocket. Asp-450, Asp-461, and His-524 together coordinate Zn(2+). 3 residues coordinate substrate: His-524, His-533, and Glu-555. Residues Glu-555 and Glu-569 each contribute to the Zn(2+) site. Residue Ala-650 is the site of GPI-anchor amidated alanine attachment. Positions Ser-651–Cys-674 are cleaved as a propeptide — removed in mature form.

This sequence belongs to the peptidase M24B family. Homotrimer. Zn(2+) serves as cofactor. N-glycosylated. As to expression, expressed strongly in lung, liver and heart, and at lower levels in kidney, testis, brain, spleen and skeletal muscle.

It is found in the cell membrane. The catalysed reaction is Release of any N-terminal amino acid, including proline, that is linked to proline, even from a dipeptide or tripeptide.. Its activity is regulated as follows. Inhibited by the chelating agents 1,10-phenanthroline and EDTA. Inhibited by the thiol-containing compounds 2-mercaptoethanol and dithiothreitol. Also inhibited by apstatin, captopril and p-(ch1oromercuri)benzenesulfonic acid. Weakly inhibited by D,L-2-mercaptomethyl-3-guanidinoethylthiopropanoic acid and N-[l-(R,S)-carboxy-(2-phenylethyl)]-Ala-Ala-Phe-p-aminobenzoate. Inhibited by ramiprilat and enalaprilat, in a Mn(2+)-dependent manner. Metal ions have a complex substrate- and concentration-dependent effect on activity. Activity towards Arg-Pro-Pro and Gly-Pro-Hyp is stimulated by Mn(2+) ion concentrations of 10-100 uM and then inhibited at Mn(2+) concentrations of 1-2 mM. Mn(2+) concentrations in excess of 2 mM stimulate activity towards Gly-Pro-Hyp but inhibit activity towards Arg-Pro-Pro. Zn(2+) and Co(2+) ions also inhibit activity towards Arg-Pro-Pro at high concentrations. Activity towards bradykinin is inhibited by Mn(2+) concentrations in excess of 1 mM. Functionally, membrane-bound metalloprotease which catalyzes the removal of a penultimate prolyl residue from the N-termini of peptides, such as Arg-Pro-Pro. May play a role in the metabolism of the vasodilator bradykinin. The chain is Xaa-Pro aminopeptidase 2 from Rattus norvegicus (Rat).